A 207-amino-acid chain; its full sequence is Small ribosomal subunit protein uS4c (207 aa).

Residues 20–52 (GFSKKIDRNHTPPGQHGWKKKASDQKKSKESQY) are disordered. Over residues 40-52 (KASDQKKSKESQY) the composition is skewed to basic and acidic residues. Residues 97–158 (MRLDNIIYRL…NSQQLIKNYL (62 aa)) enclose the S4 RNA-binding domain.

The protein belongs to the universal ribosomal protein uS4 family. Part of the 30S ribosomal subunit. Contacts protein S5. The interaction surface between S4 and S5 is involved in control of translational fidelity.

The protein localises to the plastid. In terms of biological role, one of the primary rRNA binding proteins, it binds directly to 16S rRNA where it nucleates assembly of the body of the 30S subunit. With S5 and S12 plays an important role in translational accuracy. This chain is Small ribosomal subunit protein uS4c (rps4), found in Prototheca wickerhamii.